A 479-amino-acid chain; its full sequence is Aspartyl/glutamyl-tRNA(Asn/Gln) amidotransferase subunit B (479 aa).

The protein belongs to the GatB/GatE family. GatB subfamily. Heterotrimer of A, B and C subunits.

The catalysed reaction is L-glutamyl-tRNA(Gln) + L-glutamine + ATP + H2O = L-glutaminyl-tRNA(Gln) + L-glutamate + ADP + phosphate + H(+). It carries out the reaction L-aspartyl-tRNA(Asn) + L-glutamine + ATP + H2O = L-asparaginyl-tRNA(Asn) + L-glutamate + ADP + phosphate + 2 H(+). Allows the formation of correctly charged Asn-tRNA(Asn) or Gln-tRNA(Gln) through the transamidation of misacylated Asp-tRNA(Asn) or Glu-tRNA(Gln) in organisms which lack either or both of asparaginyl-tRNA or glutaminyl-tRNA synthetases. The reaction takes place in the presence of glutamine and ATP through an activated phospho-Asp-tRNA(Asn) or phospho-Glu-tRNA(Gln). This chain is Aspartyl/glutamyl-tRNA(Asn/Gln) amidotransferase subunit B, found in Deinococcus radiodurans (strain ATCC 13939 / DSM 20539 / JCM 16871 / CCUG 27074 / LMG 4051 / NBRC 15346 / NCIMB 9279 / VKM B-1422 / R1).